The primary structure comprises 594 residues: (E)-beta-ocimene synthase TPS6FN (594 aa).

Residues R303, D340, D344, R489, and N492 each contribute to the (2E)-geranyl diphosphate site. Residues D340 and D344 each contribute to the Mg(2+) site. Residues D340–D344 carry the DDXXD motif motif. Mg(2+) is bound by residues N492, T496, and E500.

The protein belongs to the terpene synthase family. Tpsb subfamily. It depends on Mg(2+) as a cofactor. Mn(2+) is required as a cofactor. Expressed in glandular trichomes two to four weeks after flowering onset.

The enzyme catalyses (2E)-geranyl diphosphate = (E)-beta-ocimene + diphosphate. It carries out the reaction (2E)-geranyl diphosphate = (Z)-beta-ocimene + diphosphate. Its pathway is secondary metabolite biosynthesis; terpenoid biosynthesis. Functionally, involved in monoterpene (C10) olefins biosynthesis, constituants of cannabinoids and terpenoids-rich resins. Catalyzes mainly the conversion of (2E)-geranyl diphosphate to (E)-beta-ocimene, and also produces minor products such as (Z)-beta-ocimene. This chain is (E)-beta-ocimene synthase TPS6FN, found in Cannabis sativa (Hemp).